A 115-amino-acid polypeptide reads, in one-letter code: MPILISPSDNTGWGLGKLRIRATGLTFTDSTPVSVRHYFRDSGGQRNGRATRAHLRRNLKKYRRKHDRRTHTRRVQPDVILIKAGRRTARSARRRSARKSRSEKTGPRIRYTRRI.

Positions Pro-2–Thr-23 are excised as a propeptide. Residues Gly-85–Lys-99 are compositionally biased toward basic residues. The disordered stretch occupies residues Gly-85–Ile-115. Residues Arg-114–Ile-115 carry the Nuclear localization signal motif.

The protein belongs to the adenoviridae histone-like nucleoprotein family. As to quaternary structure, interacts with the core-capsid bridging protein; this interaction bridges the virus core to the capsid. Interacts with host NPM1; this interaction might play a role in placing the pre-histone-like nucleoprotein on the viral DNA or regulating viral gene expression. Interacts with host HMGB1; this interaction inhibits host immune response. In terms of processing, cleaved near the N-terminus by the viral protease during virion maturation to form the mature protein.

It is found in the virion. Its subcellular location is the host nucleus. The protein resides in the host nucleolus. Plays a role in the inhibition of host immune response within the nucleus. Interacts with cellular nucleosomes and immobilizes the host immune danger signal HMGB1 on chromatin. In turn, prevents HMGB1 release out of the cell and thus decreases inflammation. Also plays a role in the wrapping and condensation of the viral DNA. May also promote viral genome import into the nucleus. This chain is Pre-histone-like nucleoprotein, found in Pantherophis guttatus (Corn snake).